Reading from the N-terminus, the 144-residue chain is 3-hydroxyacyl-[acyl-carrier-protein] dehydratase FabZ (144 aa).

Residue His47 is part of the active site.

The protein belongs to the thioester dehydratase family. FabZ subfamily.

The protein localises to the cytoplasm. The enzyme catalyses a (3R)-hydroxyacyl-[ACP] = a (2E)-enoyl-[ACP] + H2O. Functionally, involved in unsaturated fatty acids biosynthesis. Catalyzes the dehydration of short chain beta-hydroxyacyl-ACPs and long chain saturated and unsaturated beta-hydroxyacyl-ACPs. This chain is 3-hydroxyacyl-[acyl-carrier-protein] dehydratase FabZ, found in Nitrosomonas eutropha (strain DSM 101675 / C91 / Nm57).